Reading from the N-terminus, the 151-residue chain is Guanylate kinase homolog (151 aa).

Residues 1–141 enclose the Guanylate kinase-like domain; it reads MEREGVDYHY…AYSKLIQILQ (141 aa).

This sequence belongs to the guanylate kinase family.

This chain is Guanylate kinase homolog, found in Vaccinia virus (strain Copenhagen) (VACV).